The following is a 749-amino-acid chain: MEVVPAEVNSLLPEEIMDTGITLVDDDSIEAVIVSSPIPMETELEEIVNINSTGDSTATPISTEPITVYSNHTNQVAVNTTITKADSNTTVKPAFPSGLQKLGAQTPVTISANQIILNKVSQTSDLKLGNQTLKPDGQKLILTTLGKSGSPIVLALPHSQLPQAQKVTTQAQSGDAKLPPQQIKVVTIGGRPEVKPVIGVSALTPGSQLINTTTQPSVLQTQQLKTVQIAKKPRTPTSGPVITKLIFAKPINSKAVTGQTTQVSPPVIAGRVLSQSTPGTPSKTITISESGVIGSTLNSTTQTPNKIAISPLKSPNKAVKSTVQTITVGGVSTSQFKTIIPLATAPNVQQIQVPGSKFHYVRLVTATSASSSTQPVSQNPSTNTQPLQQAKPVVVNTTPVRMSVPIVSAQAVKQVVPKPINPTSQIVTTSQPQQRLIMPATPLPQIQPNLTNLPPGTVLAPAPGTGNVGYAVLPAQYVTQLQQSSYVSIASNSTFTGTSGIQTQARLPFNGIIPSESASRPRKPCNCTKSLCLKLYCDCFANGEFCNNCNCTNCYNNLEHENERQKAIKACLDRNPEAFKPKIGKGKEGESDRRHSKGCNCKRSGCLKNYCECYEAKIMCSSICKCIGCKNFEESPERKTLMHLADAAEVRVQQQTAAKTKLSSQISDLLTRPTPALNSGGGKLPFTFVTKEVAEATCNCLLAQAEQADKKGKSKAAAERMILEEFGRCLMSVINSAGKAKSDPCAMNC.

Residue Lys-139 forms a Glycyl lysine isopeptide (Lys-Gly) (interchain with G-Cter in SUMO2) linkage. Lys-244 and Lys-249 each carry N6-acetyllysine. Phosphoserine occurs at positions 264, 282, 310, and 314. A Glycyl lysine isopeptide (Lys-Gly) (interchain with G-Cter in SUMO2) cross-link involves residue Lys-357. The segment at 369-388 (ASSSTQPVSQNPSTNTQPLQ) is disordered. Residues 521-634 (PRKPCNCTKS…KCIGCKNFEE (114 aa)) enclose the CRC domain. Residues 523 to 536 (KPCNCTKSLCLKLY) form a DNA-binding region. Residues Cys-525, Cys-527, Cys-532, Cys-537, Cys-539, Cys-546, Cys-549, Cys-551, and Cys-554 each contribute to the Zn(2+) site. Residues 583–596 (IGKGKEGESDRRHS) are linker. Positions 599, 601, 606, 611, 613, 620, 624, 626, and 629 each coordinate Zn(2+). Residues 599 to 612 (CNCKRSGCLKNYCE) form a DNA-binding region. The residue at position 635 (Ser-635) is a Phosphoserine. Residues Lys-639, Lys-659, and Lys-661 each participate in a glycyl lysine isopeptide (Lys-Gly) (interchain with G-Cter in SUMO2) cross-link.

The protein belongs to the lin-54 family. In terms of assembly, component of the DREAM complex (also named LINC complex) at least composed of E2F4, E2F5, LIN9, LIN37, LIN52, LIN54, MYBL1, MYBL2, RBL1, RBL2, RBBP4, TFDP1 and TFDP2. The complex exists in quiescent cells where it represses cell cycle-dependent genes. It dissociates in S phase when LIN9, LIN37, LIN52 and LIN54 form a subcomplex that binds to MYBL2.

It is found in the nucleus. Its function is as follows. Component of the DREAM complex, a multiprotein complex that can both act as a transcription activator or repressor depending on the context. In G0 phase, the complex binds to more than 800 promoters and is required for repression of E2F target genes. In S phase, the complex selectively binds to the promoters of G2/M genes whose products are required for mitosis and participates in their cell cycle dependent activation. In the complex, acts as a DNA-binding protein that binds the promoter of CDK1 in a sequence-specific manner. Specifically recognizes the consensus motif 5'-TTYRAA-3' in target DNA. This chain is Protein lin-54 homolog (LIN54), found in Homo sapiens (Human).